Reading from the N-terminus, the 312-residue chain is Ribosomal RNA small subunit methyltransferase H (312 aa).

S-adenosyl-L-methionine-binding positions include 35–37 (GGH), Asp55, Phe79, Asp100, and Gln107.

This sequence belongs to the methyltransferase superfamily. RsmH family.

The protein resides in the cytoplasm. The catalysed reaction is cytidine(1402) in 16S rRNA + S-adenosyl-L-methionine = N(4)-methylcytidine(1402) in 16S rRNA + S-adenosyl-L-homocysteine + H(+). Specifically methylates the N4 position of cytidine in position 1402 (C1402) of 16S rRNA. This chain is Ribosomal RNA small subunit methyltransferase H, found in Azoarcus sp. (strain BH72).